The following is a 272-amino-acid chain: Undecaprenyl-diphosphatase (272 aa).

8 consecutive transmembrane segments (helical) span residues 5–25, 45–65, 88–108, 115–135, 152–171, 189–209, 221–241, and 251–271; these read YSLF…FLPV, AKTF…VVFW, HLTL…GLAF, LFNP…LLAA, TYRQ…WPGF, YAAS…ASGL, GDLP…LIAI, and ISFV…YWVF.

Belongs to the UppP family.

It is found in the cell inner membrane. It carries out the reaction di-trans,octa-cis-undecaprenyl diphosphate + H2O = di-trans,octa-cis-undecaprenyl phosphate + phosphate + H(+). Catalyzes the dephosphorylation of undecaprenyl diphosphate (UPP). Confers resistance to bacitracin. This chain is Undecaprenyl-diphosphatase, found in Yersinia enterocolitica serotype O:8 / biotype 1B (strain NCTC 13174 / 8081).